A 1124-amino-acid polypeptide reads, in one-letter code: Eukaryotic translation initiation factor 3 subunit A (1124 aa).

Residues 96–124 are a coiled coil; the sequence is LKMAEERTEQAQQQSSQATVDIDDLDNLA. In terms of domain architecture, PCI spans 317–498; sequence IQRMTTHVLI…ECVHFGTDLS (182 aa). Basic and acidic residues-rich tracts occupy residues 812 to 851 and 860 to 883; these read EERR…RQLA and EVER…ERRP. Positions 812 to 1124 are disordered; that stretch reads EERRRIEEEL…EEGWTDVKHR (313 aa). Low complexity predominate over residues 900 to 910; it reads PAAAAPANPAA. Basic and acidic residues-rich tracts occupy residues 928–952, 960–990, 1007–1048, and 1063–1100; these read PRER…EKDG, RGGD…DRGP, PRRD…RGGG, and DDNR…EARP.

It belongs to the eIF-3 subunit A family. In terms of assembly, component of the eukaryotic translation initiation factor 3 (eIF-3) complex.

Its subcellular location is the cytoplasm. RNA-binding component of the eukaryotic translation initiation factor 3 (eIF-3) complex, which is involved in protein synthesis of a specialized repertoire of mRNAs and, together with other initiation factors, stimulates binding of mRNA and methionyl-tRNAi to the 40S ribosome. The eIF-3 complex specifically targets and initiates translation of a subset of mRNAs involved in cell proliferation. The polypeptide is Eukaryotic translation initiation factor 3 subunit A (Anopheles gambiae (African malaria mosquito)).